Consider the following 114-residue polypeptide: Snake venom vascular endothelial growth factor (114 aa).

Q1 is subject to Pyrrolidone carboxylic acid. Intrachain disulfides connect C14-C56, C45-C91, and C49-C93. The segment at 92-114 is disordered; it reads ECRPGSTVNNGKRKKNPKEGEPR.

Belongs to the PDGF/VEGF growth factor family. Snake venom VEGF subfamily. As to quaternary structure, homodimer; disulfide-linked. Interacts with human VEGF receptor 1/FLT1. Interacts with human VEGF receptor 2/KDR. In terms of tissue distribution, expressed by venom gland.

Its subcellular location is the secreted. Snake venom vascular endothelial growth factor (svVEGF) that may contribute to venom dispersion and prey subjugation by inducing vascular permeability and hypotension. Induces an increase in capillary permeability after intradermal injection, as well as a drastic hypotensive effect after intravenous injection. The hypotension is mediated by nitric oxide (NO), which is produced by VEGF-activated endothelium NO synthase. Induces angiogenesis and migration of human vascular endothelial cells in vitro. Exhibits angiogenic activity by inducing human umbilical vein endothelial cells (HUVEC) to develop vessels in vitro. Induces cellular migration of HUVEC cells towards a wound in scratch assays, enhancing wound closure after 12 h by 49.5%. Induces dose-dependent leukocyte recruitment to the peritoneal cavity leading to increased vascular permeability in mice. In Crotalus durissus terrificus (South American rattlesnake), this protein is Snake venom vascular endothelial growth factor.